Consider the following 538-residue polypeptide: Low affinity inorganic phosphate transporter 3 (538 aa).

Residues methionine 1 to alanine 24 are Cytoplasmic-facing. The helical transmembrane segment at isoleucine 25 to valine 45 threads the bilayer. The Extracellular portion of the chain corresponds to threonine 46–serine 70. Residues alanine 71–leucine 91 form a helical membrane-spanning segment. Residues glycine 92–lysine 99 are Cytoplasmic-facing. The chain crosses the membrane as a helical span at residues valine 100–glycine 120. Residues lysine 121–threonine 122 are Extracellular-facing. Residues alanine 123–glycine 143 form a helical membrane-spanning segment. Residues aspartate 144 to phenylalanine 164 lie on the Cytoplasmic side of the membrane. Residues isoleucine 165–isoleucine 185 traverse the membrane as a helical segment. Residues valine 186 to alanine 211 are Extracellular-facing. Residues aspartate 212–tryptophan 232 form a helical membrane-spanning segment. Topologically, residues arginine 233 to arginine 292 are cytoplasmic. Residues histidine 293–serine 313 traverse the membrane as a helical segment. At glutamine 314–arginine 345 the chain is on the extracellular side. A helical transmembrane segment spans residues alanine 346–isoleucine 366. At aspartate 367–arginine 371 the chain is on the cytoplasmic side. Residues phenylalanine 372–proline 392 traverse the membrane as a helical segment. Topologically, residues tyrosine 393 to arginine 402 are extracellular. Residues isoleucine 403–threonine 423 traverse the membrane as a helical segment. Topologically, residues threonine 424–glycine 442 are cytoplasmic. A helical transmembrane segment spans residues isoleucine 443–alanine 463. Residues glutamine 464–asparagine 483 lie on the Extracellular side of the membrane. Residues alanine 484 to glutamate 504 form a helical membrane-spanning segment. The Cytoplasmic portion of the chain corresponds to serine 505–valine 538. Residues lysine 506–asparagine 517 are compositionally biased toward basic and acidic residues. Residues lysine 506–valine 538 are disordered.

This sequence belongs to the major facilitator superfamily. Phosphate:H(+) symporter (TC 2.A.1.9) family. In terms of tissue distribution, expressed at low levels in non-mycorrhized roots.

Its subcellular location is the cell membrane. It catalyses the reaction phosphate(in) + H(+)(in) = phosphate(out) + H(+)(out). In terms of biological role, low-affinity transporter for external inorganic phosphate (Pi) probably involved in the acquisition of phosphate released by arbuscular mycorrhizal (AM) fungi during AM symbiosis. This chain is Low affinity inorganic phosphate transporter 3, found in Petunia hybrida (Petunia).